Here is a 132-residue protein sequence, read N- to C-terminus: Pro-MCH 1 (132 aa).

An N-terminal signal peptide occupies residues 1-24 (MRHYVLSISFAVALFLECYTPSTA). Residues cysteine 120 and cysteine 129 are joined by a disulfide bond.

Belongs to the melanin-concentrating hormone family. In terms of tissue distribution, pituitary gland. Produced in neurons of lateral basal hypothalamus which project both to the brain and to the neural lobe of the pituitary gland from where MCH is released.

Functionally, plays a role in skin pigmentation by antagonizing the action of melanotropin alpha. Induces melanin concentration within the melanophores. May participate in the control of the hypothalamo-pituitary adrenal gland axis by inhibiting the release of ACTH. The sequence is that of Pro-MCH 1 (mch1) from Oncorhynchus keta (Chum salmon).